We begin with the raw amino-acid sequence, 530 residues long: Testis-expressed protein 44 (530 aa).

The span at 1-10 (MTAEPLEDPE) shows a compositional bias: acidic residues. Disordered stretches follow at residues 1 to 85 (MTAE…FIRT), 207 to 233 (ATSA…TSLL), 256 to 290 (ENNR…QPVL), and 305 to 384 (QTSV…SPDF). Composition is skewed to polar residues over residues 11–26 (ASSS…SSDN), 222–233 (GQDNPEETTSLL), and 257–280 (NNRT…TLGN). Positions 365 to 381 (PPDPPDPGSPGGSPPHS) are enriched in pro residues. Phosphoserine is present on S468.

The protein resides in the cytoplasm. This Mus musculus (Mouse) protein is Testis-expressed protein 44 (Tex44).